A 341-amino-acid polypeptide reads, in one-letter code: Glyceraldehyde-3-phosphate dehydrogenase 2 (341 aa).

Residues 12-13 (RI), Arg-78, and Thr-120 each bind NAD(+). D-glyceraldehyde 3-phosphate contacts are provided by residues 152–154 (SCT) and Thr-183. Cys-153 functions as the Nucleophile in the catalytic mechanism. Residue Asn-184 coordinates NAD(+). Residues Arg-198, 211–212 (TG), and Arg-234 each bind D-glyceraldehyde 3-phosphate. NAD(+) is bound at residue Asn-313.

The protein belongs to the glyceraldehyde-3-phosphate dehydrogenase family. In terms of assembly, homotetramer.

It localises to the cytoplasm. The catalysed reaction is D-glyceraldehyde 3-phosphate + phosphate + NAD(+) = (2R)-3-phospho-glyceroyl phosphate + NADH + H(+). It participates in carbohydrate degradation; glycolysis; pyruvate from D-glyceraldehyde 3-phosphate: step 1/5. Catalyzes the oxidative phosphorylation of glyceraldehyde 3-phosphate (G3P) to 1,3-bisphosphoglycerate (BPG) using the cofactor NAD. The first reaction step involves the formation of a hemiacetal intermediate between G3P and a cysteine residue, and this hemiacetal intermediate is then oxidized to a thioester, with concomitant reduction of NAD to NADH. The reduced NADH is then exchanged with the second NAD, and the thioester is attacked by a nucleophilic inorganic phosphate to produce BPG. The polypeptide is Glyceraldehyde-3-phosphate dehydrogenase 2 (gapA2) (Staphylococcus aureus (strain MRSA252)).